Reading from the N-terminus, the 540-residue chain is MLO protein homolog 1 (540 aa).

The Extracellular portion of the chain corresponds to 1 to 16 (MAGGRSGSRELPETPT). The helical transmembrane segment at 17–37 (WAVAVVCAVLVLVSVAMEHGL) threads the bilayer. Over 38 to 60 (HNLSHWFRRRQKKAMGDALDKIK) the chain is Cytoplasmic. Residues 61–81 (AELMLLGFISLLLTVAQAPIS) form a helical membrane-spanning segment. Residues 82–142 (KICIPKSAAN…MSAKSMHQLH (61 aa)) lie on the Extracellular side of the membrane. The helical transmembrane segment at 143–163 (IFIFVLAVFHVTYCVITMGLG) threads the bilayer. The Cytoplasmic segment spans residues 164–265 (RLKMKKWKKW…IKRSLEDDFK (102 aa)). A helical membrane pass occupies residues 266–286 (VVVGISLPLWFVGILVLFLDI). Residue histidine 287 is a topological domain, extracellular. Residues 288 to 308 (GLGTLIWISFVPLIIVLLVGT) form a helical membrane-spanning segment. Residues 309–347 (KLEMVIMQMAQEIQDRATVIQGAPVVEPSNKYFWFNRPD) lie on the Cytoplasmic side of the membrane. A helical transmembrane segment spans residues 348 to 368 (WVLFFIHLTLFHNAFQMAHFV). Residues 369-383 (WTMATPGLKKCFHEN) lie on the Extracellular side of the membrane. The chain crosses the membrane as a helical span at residues 384-404 (IWLSIVEVIVGISLQVLCSYI). The Cytoplasmic segment spans residues 405–540 (TFPLYALVTQ…DSDFSFSAQR (136 aa)). The tract at residues 426 to 447 (EQTMKALMNWRKKAMEKKKVRD) is calmodulin-binding. The disordered stretch occupies residues 468 to 526 (ASPVHLLQDHRARSDDPPSPITVASPPAPEEDIYPVPAAAASRQLLDDPPDRRWMASSS). Composition is skewed to basic and acidic residues over residues 474 to 483 (LQDHRARSDD) and 512 to 521 (LLDDPPDRRW).

It belongs to the MLO family.

The protein resides in the membrane. In terms of biological role, may be involved in modulation of pathogen defense and leaf cell death. Activity seems to be regulated by Ca(2+)-dependent calmodulin binding and seems not to require heterotrimeric G proteins. The chain is MLO protein homolog 1 (MLO1) from Oryza sativa subsp. japonica (Rice).